The sequence spans 564 residues: MRLSQFHLHTTKETPADAELVSHRLMLRAGMIRKLASGLYTWSPLGLRVLRKVEAIVREEMNRAGAVEVLFPTIQPRELWDATGRWEKFGGQLLKIKDRKEQEFCYTPTAEEAAAEFARQEINSYKQLPLNFYQIQTKFRDEIRPRFGVMRAREFLMKDAYSFHLTDADMAREYDNMRAAYIRIFTRLGLEFRAVQADSGAIGGDASQEFHVIAESGEDSLAFSTGSDYAANVETASAALPAPRPAAGETLQRVDTPTQKTCEDVAQLLGLPLQRTVKSIAVMTTAGFVLVLVRGDHAVNELKLAKVAGMADYRLANESEIRQHLGSEPGFLGPVQPAQPIRIIADRDVAAMADFVVGANAVGVHLTGVNWGRDLPEPETVADVRNVVDGDRASDGGELRLTRGIEVGHVFQLGSKYAEALQATVLDENGKAAVMKMGCYGIGISRIVAAAIEQNHDDAGIVWPAPMAPWKVVVCVINPKQDAQVAAAAGDLLEELIAAGIDAALDDRGLRPGAMFADMELLGVPHRVVVSERGLAAGTFEYRARTAESAENLDKAGLFSRLGN.

The protein belongs to the class-II aminoacyl-tRNA synthetase family. ProS type 1 subfamily. As to quaternary structure, homodimer.

It localises to the cytoplasm. It catalyses the reaction tRNA(Pro) + L-proline + ATP = L-prolyl-tRNA(Pro) + AMP + diphosphate. Its function is as follows. Catalyzes the attachment of proline to tRNA(Pro) in a two-step reaction: proline is first activated by ATP to form Pro-AMP and then transferred to the acceptor end of tRNA(Pro). As ProRS can inadvertently accommodate and process non-cognate amino acids such as alanine and cysteine, to avoid such errors it has two additional distinct editing activities against alanine. One activity is designated as 'pretransfer' editing and involves the tRNA(Pro)-independent hydrolysis of activated Ala-AMP. The other activity is designated 'posttransfer' editing and involves deacylation of mischarged Ala-tRNA(Pro). The misacylated Cys-tRNA(Pro) is not edited by ProRS. The protein is Proline--tRNA ligase of Xanthomonas campestris pv. campestris (strain 8004).